The following is a 193-amino-acid chain: Immunogenic protein MPB70 (193 aa).

An N-terminal signal peptide occupies residues 1 to 30 (MKVKNTIAATSFAAAGLAALAVAVSPPAAA). The 133-residue stretch at 57 to 189 (QDPVAVAASN…ATVYMIDSVL (133 aa)) folds into the FAS1 domain.

As to quaternary structure, generally found as a monomer; homodimer in culture fluids.

Its subcellular location is the secreted. The protein is Immunogenic protein MPB70 (mpb70) of Mycobacterium bovis (strain ATCC BAA-935 / AF2122/97).